The sequence spans 243 residues: Carboxy-S-adenosyl-L-methionine synthase (243 aa).

Residues tyrosine 35, 68-70 (GCS), 92-93 (DN), and arginine 199 each bind S-adenosyl-L-methionine.

It belongs to the class I-like SAM-binding methyltransferase superfamily. Cx-SAM synthase family. In terms of assembly, homodimer.

The catalysed reaction is prephenate + S-adenosyl-L-methionine = carboxy-S-adenosyl-L-methionine + 3-phenylpyruvate + H2O. Functionally, catalyzes the conversion of S-adenosyl-L-methionine (SAM) to carboxy-S-adenosyl-L-methionine (Cx-SAM). This Helicobacter pylori (strain J99 / ATCC 700824) (Campylobacter pylori J99) protein is Carboxy-S-adenosyl-L-methionine synthase.